A 401-amino-acid polypeptide reads, in one-letter code: 3-sulfinopropanoyl-CoA desulfinase (401 aa).

FAD is bound by residues Ile121–Ser124, Ser130, and Tyr153–Thr156. Tyr243–Asn244 lines the substrate pocket. Residues Arg272, Gln339, Ser343, Gly366 to Gln370, and Gln387 contribute to the FAD site.

It belongs to the acyl-CoA dehydrogenase family. Homotetramer. FAD serves as cofactor.

The enzyme catalyses 3-sulfinopropanoyl-CoA + H2O = propanoyl-CoA + sulfite + H(+). Its function is as follows. Catalyzes the conversion 3-sulfinopropanoyl-CoA (3SP-CoA) to propanoyl-CoA by abstraction of sulfite. Does not show dehydrogenase activity. Involved in the degradation of 3,3'-dithiodipropionate (DTDP), a sulfur-containing precursor substrate for biosynthesis of polythioesters (PTEs). The polypeptide is 3-sulfinopropanoyl-CoA desulfinase (Advenella mimigardefordensis (strain DSM 17166 / LMG 22922 / DPN7)).